Reading from the N-terminus, the 1434-residue chain is Nitric oxide synthase 1 (1434 aa).

The interval 1–205 is interaction with NOSIP; sequence MEDHMFGVQQ…LQGRGENNEL (205 aa). One can recognise a PDZ domain in the interval 17–99; the sequence is SVRLFKRKVG…ETHVVLILRG (83 aa). Disordered stretches follow at residues 112–192 and 276–302; these read TGDG…KKAT and NNPY…PSKC. The interaction with DYNLL1/PIN stretch occupies residues 163 to 245; it reads YDDGQEAGSL…MGIQVDRDLD (83 aa). Residues 285–299 show a composition bias toward polar residues; sequence PPTSGKQSPTKNGSP. Serine 339 lines the (6R)-L-erythro-5,6,7,8-tetrahydrobiopterin pocket. Cysteine 420 is a heme b binding site. 4 residues coordinate L-arginine: glutamine 483, tryptophan 592, tyrosine 593, and glutamate 597. (6R)-L-erythro-5,6,7,8-tetrahydrobiopterin-binding residues include valine 682, tryptophan 683, and phenylalanine 696. Residue tyrosine 711 participates in heme b binding. The segment at 730–750 is calmodulin-binding; the sequence is KRRAIGFKKLAEAVKFSAKLM. In terms of domain architecture, Flavodoxin-like spans 760–940; it reads ATILYATETG…AFRTWAKKVF (181 aa). Residues threonine 766, glutamate 767, threonine 768, lysine 770, serine 771, serine 812, threonine 813, and glycine 817 each contribute to the FMN site. Residues serine 852, serine 862, and serine 863 each carry the phosphoserine modification. Serine 891, histidine 896, cysteine 898, glutamate 924, and glutamine 928 together coordinate FMN. The FAD-binding FR-type domain maps to 995–1242; that stretch reads KRVSAARLLS…VRGAPSFHLP (248 aa). Arginine 1015 contacts NADP(+). FAD contacts are provided by histidine 1037, arginine 1178, tyrosine 1179, tyrosine 1180, serine 1181, threonine 1196, and alanine 1198. Residue serine 1201 coordinates NADP(+). Tyrosine 1202, valine 1215, cysteine 1216, and serine 1217 together coordinate FAD. The NADP(+) site is built by threonine 1256, arginine 1289, serine 1318, arginine 1319, lysine 1325, tyrosine 1327, glutamine 1329, aspartate 1362, threonine 1403, and arginine 1405.

The protein belongs to the NOS family. In terms of assembly, homodimer. Interacts with DLG4; the interaction possibly being prevented by the association between NOS1 and CAPON. Forms a ternary complex with CAPON and RASD1. Forms a ternary complex with CAPON and SYN1. Interacts with ZDHHC23. Interacts with NOSIP; which may impair its synaptic location. Interacts with HTR4. Interacts with SLC6A4. Interacts with VAC14. Interacts (via N-terminal domain) with DLG4 (via N-terminal tandem pair of PDZ domains). Interacts with SLC6A4. Forms a complex with ASL, ASS1 and SLC7A1; the complex regulates cell-autonomous L-arginine synthesis and citrulline recycling while channeling extracellular L-arginine to nitric oxide synthesis pathway. Interacts with DMD; localizes NOS1 to sarcolemma in muscle cells. Interacts with DYNLL1; inhibits the nitric oxide synthase activity. Heme b serves as cofactor. It depends on FAD as a cofactor. Requires FMN as cofactor. (6R)-L-erythro-5,6,7,8-tetrahydrobiopterin is required as a cofactor. Ubiquitinated; mediated by STUB1/CHIP in the presence of Hsp70 and Hsp40 (in vitro). In terms of tissue distribution, isoform 1 is ubiquitously expressed: detected in skeletal muscle and brain, also in testis, lung and kidney, and at low levels in heart, adrenal gland and retina. Not detected in the platelets. Isoform 3 is expressed only in testis. Isoform 4 is detected in testis, skeletal muscle, lung, and kidney, at low levels in the brain, but not in the heart and adrenal gland.

Its subcellular location is the cell membrane. It localises to the sarcolemma. The protein resides in the cell projection. It is found in the dendritic spine. It carries out the reaction 2 L-arginine + 3 NADPH + 4 O2 + H(+) = 2 L-citrulline + 2 nitric oxide + 3 NADP(+) + 4 H2O. Its activity is regulated as follows. Stimulated by calcium/calmodulin. Inhibited by DYNLL1 that prevents the dimerization of the protein. Inhibited by NOSIP. Its function is as follows. Produces nitric oxide (NO) which is a messenger molecule with diverse functions throughout the body. In the brain and peripheral nervous system, NO displays many properties of a neurotransmitter. Probably has nitrosylase activity and mediates cysteine S-nitrosylation of cytoplasmic target proteins such SRR. The sequence is that of Nitric oxide synthase 1 from Homo sapiens (Human).